Reading from the N-terminus, the 140-residue chain is Putative pre-16S rRNA nuclease (140 aa).

The protein belongs to the YqgF nuclease family.

It is found in the cytoplasm. Its function is as follows. Could be a nuclease involved in processing of the 5'-end of pre-16S rRNA. The polypeptide is Putative pre-16S rRNA nuclease (Parabacteroides distasonis (strain ATCC 8503 / DSM 20701 / CIP 104284 / JCM 5825 / NCTC 11152)).